The primary structure comprises 594 residues: DNA mismatch repair protein MutL (594 aa).

Belongs to the DNA mismatch repair MutL/HexB family.

Functionally, this protein is involved in the repair of mismatches in DNA. It is required for dam-dependent methyl-directed DNA mismatch repair. May act as a 'molecular matchmaker', a protein that promotes the formation of a stable complex between two or more DNA-binding proteins in an ATP-dependent manner without itself being part of a final effector complex. The polypeptide is DNA mismatch repair protein MutL (Tolumonas auensis (strain DSM 9187 / NBRC 110442 / TA 4)).